The primary structure comprises 111 residues: MAQEGKAYIHLALAIYYAGGKIDEETLKKAAEAIGMQVDEAKIKMLVASLEEVNLEEVLKQAVAAPVAAAAAAPAAAPAAEEKAEEEKKEEEEEKKEEEVDLSGLSGMFGF.

Residues 75 to 111 form a disordered region; that stretch reads AAAPAAEEKAEEEKKEEEEEKKEEEVDLSGLSGMFGF. Over residues 88 to 101 the composition is skewed to acidic residues; it reads KKEEEEEKKEEEVD.

This sequence belongs to the eukaryotic ribosomal protein P1/P2 family. Part of the 50S ribosomal subunit. Homodimer, it forms part of the ribosomal stalk which helps the ribosome interact with GTP-bound translation factors. Forms a heptameric uL10/P0(P1)2(P1)2(P1)2 complex, where uL10/P0 forms an elongated spine to which the P1 dimers bind in a sequential fashion.

Forms part of the ribosomal stalk, playing a central role in the interaction of the ribosome with GTP-bound translation factors. The protein is Large ribosomal subunit protein P1 of Aeropyrum pernix (strain ATCC 700893 / DSM 11879 / JCM 9820 / NBRC 100138 / K1).